The following is an 84-amino-acid chain: Small ribosomal subunit protein uS15 (84 aa).

Belongs to the universal ribosomal protein uS15 family. As to quaternary structure, part of the 30S ribosomal subunit. Forms a bridge to the 50S subunit in the 70S ribosome, contacting the 23S rRNA.

In terms of biological role, one of the primary rRNA binding proteins, it binds directly to 16S rRNA where it helps nucleate assembly of the platform of the 30S subunit by binding and bridging several RNA helices of the 16S rRNA. Functionally, forms an intersubunit bridge (bridge B4) with the 23S rRNA of the 50S subunit in the ribosome. The sequence is that of Small ribosomal subunit protein uS15 from Akkermansia muciniphila (strain ATCC BAA-835 / DSM 22959 / JCM 33894 / BCRC 81048 / CCUG 64013 / CIP 107961 / Muc).